A 54-amino-acid polypeptide reads, in one-letter code: Protein hunchback (54 aa).

C2H2-type zinc fingers lie at residues Arg-1–His-3, Phe-9–His-31, and Tyr-37–Leu-54.

This sequence belongs to the hunchback C2H2-type zinc-finger protein family.

It localises to the nucleus. In terms of biological role, gap class segmentation protein that controls development of head structures. The polypeptide is Protein hunchback (hb) (Calliphora vicina (Blue blowfly)).